The primary structure comprises 354 residues: Polyribonucleotide 5'-hydroxyl-kinase PF0112 (354 aa).

36–43 contacts ATP; it reads GDVDTGKT.

The cofactor is a divalent metal cation.

It catalyses the reaction a 5'-end dephospho-2'-deoxyribonucleoside-DNA + ATP = a 5'-end 5'-phospho-2'-deoxyribonucleoside-DNA + ADP + H(+). The enzyme catalyses a 5'-end dephospho-ribonucleoside-RNA + ATP = a 5'-end 5'-phospho-ribonucleoside-RNA + ADP + H(+). Functionally, polynucleotide kinase that can phosphorylate the 5'-hydroxyl groups of both single-stranded RNA (ssRNA) and single-stranded DNA (ssDNA). Exhibits a strong preference for ssRNA. The polypeptide is Polyribonucleotide 5'-hydroxyl-kinase PF0112 (Pyrococcus furiosus (strain ATCC 43587 / DSM 3638 / JCM 8422 / Vc1)).